Reading from the N-terminus, the 114-residue chain is Fatty acid-binding protein, liver (114 aa).

Belongs to the calycin superfamily. Fatty-acid binding protein (FABP) family. Post-translationally, the N-terminus is blocked.

Its subcellular location is the cytoplasm. Its function is as follows. FABPs are thought to play a role in the intracellular transport of long-chain fatty acids and their acyl-CoA esters. This is Fatty acid-binding protein, liver from Lethenteron camtschaticum (Japanese lamprey).